The sequence spans 120 residues: Large ribosomal subunit protein uL18 (120 aa).

The tract at residues 1 to 22 (MKTTRKESLKRRHRRIRRKVSG) is disordered. Residues 8-20 (SLKRRHRRIRRKV) are compositionally biased toward basic residues.

Belongs to the universal ribosomal protein uL18 family. As to quaternary structure, part of the 50S ribosomal subunit; part of the 5S rRNA/L5/L18/L25 subcomplex. Contacts the 5S and 23S rRNAs.

Functionally, this is one of the proteins that bind and probably mediate the attachment of the 5S RNA into the large ribosomal subunit, where it forms part of the central protuberance. In Crocosphaera subtropica (strain ATCC 51142 / BH68) (Cyanothece sp. (strain ATCC 51142)), this protein is Large ribosomal subunit protein uL18.